The primary structure comprises 756 residues: Phosphoinositide 3-kinase regulatory subunit 6 (756 aa).

Disordered regions lie at residues 570-589 and 716-738; these read SKSPKEGSSPRRRGAAEGTG and CSRTQKSKTSALNSHGQETEKNM. A compositionally biased stretch (polar residues) spans 717-731; the sequence is SRTQKSKTSALNSHG.

In terms of assembly, heterodimer of a catalytic subunit (PIK3CG) and a regulatory (PIK3R6) subunit. The binding of PIK3R6 to PIK3CG may exclude the binding of PIK3R5 to PIK3CG. Interacts with beta-gamma G protein dimers. Interacts with PDE3B and RAPGEF3; form a signaling complex that regulates phosphatidylinositol 3-kinase gamma in angiogenesis. In terms of tissue distribution, highly expressed in heart. In a lower extent, also expressed in brain, spleen, lung, liver, kidney, prostate, thyroid, salivary gland, dendritic cells, macrophages and neutrophils.

It is found in the cytoplasm. The protein resides in the cell membrane. Its function is as follows. Regulatory subunit of the PI3K gamma complex. Acts as an adapter to drive activation of PIK3CG by beta-gamma G protein dimers. The PIK3CG:PIK3R6 heterodimer is much less sensitive to beta-gamma G proteins than PIK3CG:PIK3R5 and its membrane recruitment and beta-gamma G protein dimer-dependent activation requires HRAS bound to PIK3CG. Recruits of the PI3K gamma complex to a PDE3B:RAPGEF3 signaling complex involved in angiogenesis; signaling seems to involve RRAS. This Mus musculus (Mouse) protein is Phosphoinositide 3-kinase regulatory subunit 6 (Pik3r6).